A 64-amino-acid polypeptide reads, in one-letter code: Large ribosomal subunit protein bL35 (64 aa).

It belongs to the bacterial ribosomal protein bL35 family.

The protein is Large ribosomal subunit protein bL35 of Amoebophilus asiaticus (strain 5a2).